A 347-amino-acid polypeptide reads, in one-letter code: GMP reductase (347 aa).

Residue 108–131 participates in NADP(+) binding; the sequence is TDFIKLSEILAKSEDLNFICIDIA. Glycine 181 and glycine 183 together coordinate K(+). Cysteine 186 acts as the Thioimidate intermediate in catalysis. An NADP(+)-binding site is contributed by 216–239; it reads IIGDGGCSCAGDVAKAFGGGADFV.

Belongs to the IMPDH/GMPR family. GuaC type 1 subfamily. In terms of assembly, homotetramer.

It catalyses the reaction IMP + NH4(+) + NADP(+) = GMP + NADPH + 2 H(+). Catalyzes the irreversible NADPH-dependent deamination of GMP to IMP. It functions in the conversion of nucleobase, nucleoside and nucleotide derivatives of G to A nucleotides, and in maintaining the intracellular balance of A and G nucleotides. In Shewanella pealeana (strain ATCC 700345 / ANG-SQ1), this protein is GMP reductase.